Reading from the N-terminus, the 213-residue chain is Uridine kinase (213 aa).

15–22 (GASASGKS) contacts ATP.

It belongs to the uridine kinase family.

The protein resides in the cytoplasm. It catalyses the reaction uridine + ATP = UMP + ADP + H(+). The enzyme catalyses cytidine + ATP = CMP + ADP + H(+). Its pathway is pyrimidine metabolism; CTP biosynthesis via salvage pathway; CTP from cytidine: step 1/3. The protein operates within pyrimidine metabolism; UMP biosynthesis via salvage pathway; UMP from uridine: step 1/1. This chain is Uridine kinase, found in Salmonella agona (strain SL483).